The following is a 219-amino-acid chain: Ribose-5-phosphate isomerase A (219 aa).

Substrate contacts are provided by residues 28–31 (SGST), 81–84 (DGAD), and 94–97 (KGGG). Residue Glu103 is the Proton acceptor of the active site. A substrate-binding site is contributed by Lys121.

Belongs to the ribose 5-phosphate isomerase family. As to quaternary structure, homodimer.

It catalyses the reaction aldehydo-D-ribose 5-phosphate = D-ribulose 5-phosphate. The protein operates within carbohydrate degradation; pentose phosphate pathway; D-ribose 5-phosphate from D-ribulose 5-phosphate (non-oxidative stage): step 1/1. In terms of biological role, catalyzes the reversible conversion of ribose-5-phosphate to ribulose 5-phosphate. The sequence is that of Ribose-5-phosphate isomerase A from Haemophilus influenzae (strain PittEE).